Consider the following 275-residue polypeptide: Fructose-2,6-bisphosphatase TIGAR (275 aa).

The active-site Tele-phosphohistidine intermediate is the H11. The active-site Proton donor/acceptor is the E89.

It belongs to the phosphoglycerate mutase family.

The protein resides in the cytoplasm. Its subcellular location is the nucleus. It is found in the mitochondrion. The enzyme catalyses beta-D-fructose 2,6-bisphosphate + H2O = beta-D-fructose 6-phosphate + phosphate. Fructose-bisphosphatase hydrolyzing fructose-2,6-bisphosphate as well as fructose-1,6-bisphosphate. Acts as a negative regulator of glycolysis by lowering intracellular levels of fructose-2,6-bisphosphate in a p53/TP53-dependent manner, resulting in the pentose phosphate pathway (PPP) activation and NADPH production. Contributes to the generation of reduced glutathione to cause a decrease in intracellular reactive oxygen species (ROS) content, correlating with its ability to protect cells from oxidative or metabolic stress-induced cell death. May play a role in mitophagy inhibition. The chain is Fructose-2,6-bisphosphatase TIGAR from Xenopus tropicalis (Western clawed frog).